A 561-amino-acid polypeptide reads, in one-letter code: Developmental and secondary metabolism regulator veA (561 aa).

Disordered regions lie at residues 1-23, 41-60, and 258-361; these read MANRPSLMPPHNETEHSVSRITR, ARACGAGAKSSADRRPVDPP, and AYAR…PQGI. The span at 12–23 shows a compositional bias: basic and acidic residues; the sequence is NETEHSVSRITR. The Velvet domain maps to 25–233; the sequence is GKQLTYKLSV…AEQGCRVRIR (209 aa). Residues 39–44 carry the Nuclear localization signal motif; that stretch reads ERARAC. The segment covering 258–268 has biased composition (basic and acidic residues); sequence AYARSSDRFTT. The span at 324–339 shows a compositional bias: polar residues; the sequence is SHSQTPSYQSHLSFGS. Positions 347–357 are enriched in pro residues; it reads PHMPPTPPPVA. The PEST stretch occupies residues 438–485; the sequence is RPQTPNLPAMPPPKPLSNDYANHVVPSVECTSPGGSGGGGYDNVRGKR. The tract at residues 491 to 524 is disordered; it reads GPTYGKRSHEDTFGLDDRSMQNGMRPDTEPYPAY. Over residues 497 to 509 the composition is skewed to basic and acidic residues; that stretch reads RSHEDTFGLDDRS.

Belongs to the velvet family. VeA subfamily. In terms of assembly, component of the heterotrimeric velvet complex composed of laeA, veA and velB; velA acting as a bridging protein between laeA and velB. Interacts with kapA. Interacts with vosA and velc.

Its subcellular location is the nucleus. The protein localises to the cytoplasm. Functionally, component of the velvet transcription factor complex that controls sexual/asexual developmental ratio in response to light, promoting sexual development in the darkness while stimulating asexual sporulation under illumination. The velvet complex acts as a global regulator for secondary metabolite gene expression. Controls the expression of the penicillin gene cluster. Positively controls the expression of the class V chitinase chiB1. Positively controls the expression of the transcription factor atfA. Required for cell wall integrity and controls hyphal branching. The chain is Developmental and secondary metabolism regulator veA from Penicillium rubens (strain ATCC 28089 / DSM 1075 / NRRL 1951 / Wisconsin 54-1255) (Penicillium chrysogenum).